Consider the following 235-residue polypeptide: Intron-encoded endonuclease I-SceI (235 aa).

The protein belongs to the LAGLIDADG endonuclease family. In terms of assembly, monomer. Mg(2+) serves as cofactor.

It is found in the mitochondrion. Its function is as follows. Mitochondrial DNA endonuclease involved in intron homing. It introduces a specific double-strand break in the DNA of the 21S rRNA gene and thus mediates the insertion of an intron, containing its own coding sequence (group I intron), into an intronless gene. Specifically recognizes and cleaves the sequence 5'-TAGGGATAACAGGGTAAT-3'. The sequence is that of Intron-encoded endonuclease I-SceI (SCEI) from Saccharomyces cerevisiae (strain ATCC 204508 / S288c) (Baker's yeast).